A 270-amino-acid chain; its full sequence is MASRGVVGIFFLSAVPLVCLELRRGIPDIGIKDFLLLCGRILLLLALLTLIISVTTSWLNSFKSPQVYLKEEEEKNEKRQKLVRKKQQEAQGEKASRYIENVLKPHQEMKLRKLEERFYQMTGEAWKLSSGHKLGGDEGTSQTSFETSNREAAKSQNLPKPLTEFPSPAEQPTCKEIPDLPEEPSQTAEEVVTVALRCPSGNVLRRRFLKSYSSQVLFDWMTRIGYHISLYSLSTSFPRRPLAVEGGQSLEDIGITVDTVLILEEKEQTN.

A topological domain (cytoplasmic) is located at residue methionine 1. Residues 2–22 (ASRGVVGIFFLSAVPLVCLEL) form a helical membrane-spanning segment. Topologically, residues 23–33 (RRGIPDIGIKD) are lumenal. A helical transmembrane segment spans residues 34–54 (FLLLCGRILLLLALLTLIISV). Residues 55-270 (TTSWLNSFKS…LILEEKEQTN (216 aa)) are Cytoplasmic-facing. The tract at residues 130–171 (SGHKLGGDEGTSQTSFETSNREAAKSQNLPKPLTEFPSPAEQ) is disordered. The residue at position 167 (serine 167) is a Phosphoserine. One can recognise a UBX domain in the interval 187–263 (TAEEVVTVAL…GITVDTVLIL (77 aa)).

As to quaternary structure, interacts with SYVN1 and VCP. In terms of tissue distribution, expressed abundantly in ovary and testis, and weakly in all other tissues tested.

It is found in the endoplasmic reticulum membrane. Functionally, involved in endoplasmic reticulum-associated degradation (ERAD) for misfolded lumenal proteins, possibly by tethering VCP to the endoplasmic reticulum membrane. May play a role in reproduction. The chain is UBX domain-containing protein 8 (UBXN8) from Homo sapiens (Human).